The chain runs to 179 residues: Large ribosomal subunit protein uL5 (179 aa).

It belongs to the universal ribosomal protein uL5 family. As to quaternary structure, part of the 50S ribosomal subunit; part of the 5S rRNA/L5/L18/L25 subcomplex. Contacts the 5S rRNA and the P site tRNA. Forms a bridge to the 30S subunit in the 70S ribosome.

This is one of the proteins that bind and probably mediate the attachment of the 5S RNA into the large ribosomal subunit, where it forms part of the central protuberance. In the 70S ribosome it contacts protein S13 of the 30S subunit (bridge B1b), connecting the 2 subunits; this bridge is implicated in subunit movement. Contacts the P site tRNA; the 5S rRNA and some of its associated proteins might help stabilize positioning of ribosome-bound tRNAs. The protein is Large ribosomal subunit protein uL5 of Desulfatibacillum aliphaticivorans.